The primary structure comprises 194 residues: Large ribosomal subunit protein bL25 (194 aa).

Belongs to the bacterial ribosomal protein bL25 family. CTC subfamily. In terms of assembly, part of the 50S ribosomal subunit; part of the 5S rRNA/L5/L18/L25 subcomplex. Contacts the 5S rRNA. Binds to the 5S rRNA independently of L5 and L18.

This is one of the proteins that binds to the 5S RNA in the ribosome where it forms part of the central protuberance. The polypeptide is Large ribosomal subunit protein bL25 (Neorickettsia sennetsu (strain ATCC VR-367 / Miyayama) (Ehrlichia sennetsu)).